A 372-amino-acid chain; its full sequence is Glutamate 5-kinase (372 aa).

ATP is bound at residue Lys-14. Positions 54, 141, and 153 each coordinate substrate. 173–174 (TD) provides a ligand contact to ATP. Residues 280–358 (RGTVVIDDGA…SQIESLLGYS (79 aa)) form the PUA domain.

The protein belongs to the glutamate 5-kinase family.

It is found in the cytoplasm. It carries out the reaction L-glutamate + ATP = L-glutamyl 5-phosphate + ADP. The protein operates within amino-acid biosynthesis; L-proline biosynthesis; L-glutamate 5-semialdehyde from L-glutamate: step 1/2. Its function is as follows. Catalyzes the transfer of a phosphate group to glutamate to form L-glutamate 5-phosphate. This Methylibium petroleiphilum (strain ATCC BAA-1232 / LMG 22953 / PM1) protein is Glutamate 5-kinase.